The following is a 339-amino-acid chain: D-erythrose-4-phosphate dehydrogenase (339 aa).

NAD(+) contacts are provided by residues 12-13 and Arg81; that span reads RI. Residues 154-156, Arg200, 213-214, and Arg236 contribute to the substrate site; these read SCT and TR. Catalysis depends on Cys155, which acts as the Nucleophile. Residue Asn318 coordinates NAD(+).

Belongs to the glyceraldehyde-3-phosphate dehydrogenase family. Epd subfamily. As to quaternary structure, homotetramer.

It localises to the cytoplasm. It carries out the reaction D-erythrose 4-phosphate + NAD(+) + H2O = 4-phospho-D-erythronate + NADH + 2 H(+). The protein operates within cofactor biosynthesis; pyridoxine 5'-phosphate biosynthesis; pyridoxine 5'-phosphate from D-erythrose 4-phosphate: step 1/5. In terms of biological role, catalyzes the NAD-dependent conversion of D-erythrose 4-phosphate to 4-phosphoerythronate. The polypeptide is D-erythrose-4-phosphate dehydrogenase (Cronobacter sakazakii (strain ATCC BAA-894) (Enterobacter sakazakii)).